Consider the following 239-residue polypeptide: Ribosomal RNA small subunit methyltransferase G (239 aa).

Residues Gly78, Phe83, 129–130 (AE), and Arg148 each bind S-adenosyl-L-methionine.

Belongs to the methyltransferase superfamily. RNA methyltransferase RsmG family.

The protein localises to the cytoplasm. Its function is as follows. Specifically methylates the N7 position of a guanine in 16S rRNA. The protein is Ribosomal RNA small subunit methyltransferase G of Clostridium beijerinckii (strain ATCC 51743 / NCIMB 8052) (Clostridium acetobutylicum).